We begin with the raw amino-acid sequence, 350 residues long: Inhibin beta E chain (350 aa).

Residues 1-19 (MRLPDVQLWLVLLWALVRA) form the signal peptide. The propeptide occupies 20–236 (QGTGSVCPSC…EPGAGRARRR (217 aa)). N-linked (GlcNAc...) asparagine glycosylation occurs at Asn198. Intrachain disulfides connect Cys240-Cys248, Cys247-Cys315, Cys276-Cys347, and Cys280-Cys349.

Belongs to the TGF-beta family. Homodimeric or heterodimeric through association with alpha and beta subunits, linked by one or more disulfide bonds. Inhibins are heterodimers of one alpha and one beta subunit. Activins are homo- or heterodimers of beta subunits only.

It is found in the secreted. In terms of biological role, inhibins and activins inhibit and activate, respectively, the secretion of follitropin by the pituitary gland. Inhibins/activins are involved in regulating a number of diverse functions such as hypothalamic and pituitary hormone secretion, gonadal hormone secretion, germ cell development and maturation, erythroid differentiation, insulin secretion, nerve cell survival, embryonic axial development or bone growth, depending on their subunit composition. Inhibins appear to oppose the functions of activins. Functionally, activin E is a homodimer of INHBE secreted by the liver that plays a crucial role in regulating metabolic homeostasis particularly in lipid metabolism and energy homeostasis. Plays a central role in the regulation of adipose tissue lipolysis by preventing the influx of fatty acids from adipose tissue into the liver. Mechanistically, signals via ACVR1C to activate SMAD2/3 signaling, suppressing PPARG target genes in adipose tissue, thereby reducing liver lipid content and improving glycemic control. Induces beige adipocyte formation and thermogenesis in response to cold exposure. This Homo sapiens (Human) protein is Inhibin beta E chain (INHBE).